The sequence spans 486 residues: F420-non-reducing hydrogenase iron-sulfur subunit A (486 aa).

Ni(2+) contacts are provided by cysteine 61 and cysteine 64.

Belongs to the [NiFe]/[NiFeSe] hydrogenase large subunit family. As to quaternary structure, the F420-non-reducing hydrogenase is composed of three subunits; MvhA, MvhD and MvhG. It forms a complex with the heterodisulfide reductase (Hdr). Requires Ni(2+) as cofactor.

Its subcellular location is the cytoplasm. Functionally, part of a complex that provides reducing equivalents for heterodisulfide reductase. The polypeptide is F420-non-reducing hydrogenase iron-sulfur subunit A (mvhA) (Archaeoglobus profundus (strain DSM 5631 / JCM 9629 / NBRC 100127 / Av18)).